A 584-amino-acid polypeptide reads, in one-letter code: Methionine--tRNA ligase (584 aa).

The 'HIGH' region motif lies at 12 to 22 (PYANGDLHLGH). Residues cysteine 144, cysteine 147, cysteine 157, and cysteine 160 each contribute to the Zn(2+) site. Positions 334-338 (QFSTS) match the 'KMSKS' region motif. Threonine 337 serves as a coordination point for ATP. The tract at residues 541 to 563 (EGRDRWAPSELEAGRPLPPPQPL) is disordered.

Belongs to the class-I aminoacyl-tRNA synthetase family. MetG type 1 subfamily. Monomer. The cofactor is Zn(2+).

It localises to the cytoplasm. The enzyme catalyses tRNA(Met) + L-methionine + ATP = L-methionyl-tRNA(Met) + AMP + diphosphate. Its function is as follows. Is required not only for elongation of protein synthesis but also for the initiation of all mRNA translation through initiator tRNA(fMet) aminoacylation. The chain is Methionine--tRNA ligase from Thermomicrobium roseum (strain ATCC 27502 / DSM 5159 / P-2).